We begin with the raw amino-acid sequence, 595 residues long: Aspartate--tRNA(Asp/Asn) ligase (595 aa).

L-aspartate is bound at residue Glu-175. Positions 199–202 (QQYK) are aspartate. Arg-221 and His-454 together coordinate L-aspartate. 221-223 (RDE) contacts ATP. Glu-488 is an ATP binding site. Arg-495 is an L-aspartate binding site. 540–543 (GIDR) contacts ATP.

It belongs to the class-II aminoacyl-tRNA synthetase family. Type 1 subfamily. In terms of assembly, homodimer.

The protein localises to the cytoplasm. The enzyme catalyses tRNA(Asx) + L-aspartate + ATP = L-aspartyl-tRNA(Asx) + AMP + diphosphate. Its function is as follows. Aspartyl-tRNA synthetase with relaxed tRNA specificity since it is able to aspartylate not only its cognate tRNA(Asp) but also tRNA(Asn). Reaction proceeds in two steps: L-aspartate is first activated by ATP to form Asp-AMP and then transferred to the acceptor end of tRNA(Asp/Asn). The polypeptide is Aspartate--tRNA(Asp/Asn) ligase (Sinorhizobium fredii (strain NBRC 101917 / NGR234)).